Reading from the N-terminus, the 86-residue chain is Toxin 3FTx-Dis4 (86 aa).

Positions 1-19 (MKTLLLSLVMVGFMYLVSG) are cleaved as a signal peptide. 3 disulfides stabilise this stretch: C24–C45, C38–C63, and C79–C84.

Belongs to the three-finger toxin family. Ancestral subfamily. Expressed by the venom gland.

It localises to the secreted. This chain is Toxin 3FTx-Dis4, found in Dispholidus typus (Boomslang).